Here is a 218-residue protein sequence, read N- to C-terminus: Regulator of G-protein signaling 20 (218 aa).

The span at 1–10 shows a compositional bias: basic and acidic residues; the sequence is MGSERTEMRK. Residues 1 to 26 are disordered; sequence MGSERTEMRKRQMAATQETPGTAQAQ. Over residues 14–26 the composition is skewed to polar residues; that stretch reads AATQETPGTAQAQ. Positions 92–208 constitute an RGS domain; the sequence is SFDKLMLTPA…MNSAIYKDLL (117 aa).

Forms a complex with G(alpha)z/i2 subunits and mu-opioid receptors; the formation of this complex results in mu-opioid receptor desensitization. Interacts with OPRM1. Fatty acylated. Heavily palmitoylated in the cysteine string motif. Post-translationally, N- and O-glycosylated in synapsomal membranes. In terms of processing, sumoylated by SUMO1 and SUM02 in synaptosomes. The sumoylated forms act as a scaffold for sequestering mu-opioid receptor-activated G(alpha) subunits.

The protein resides in the membrane. It is found in the nucleus. The protein localises to the cytoplasm. In terms of biological role, inhibits signal transduction by increasing the GTPase activity of G protein alpha subunits thereby driving them into their inactive GDP-bound form. Binds selectively to G(z)-alpha and G(alpha)-i2 subunits, accelerates their GTPase activity and regulates their signaling activities. The G(z)-alpha activity is inhibited by the phosphorylation and palmitoylation of the G-protein. Negatively regulates mu-opioid receptor-mediated activation of the G-proteins. The sequence is that of Regulator of G-protein signaling 20 (RGS20) from Gallus gallus (Chicken).